The following is a 221-amino-acid chain: 7-cyano-7-deazaguanine synthase (221 aa).

Residue 9 to 19 (YSGGMDSFTVL) coordinates ATP. Residues Cys-186, Cys-194, Cys-197, and Cys-200 each coordinate Zn(2+).

This sequence belongs to the QueC family. The cofactor is Zn(2+).

It catalyses the reaction 7-carboxy-7-deazaguanine + NH4(+) + ATP = 7-cyano-7-deazaguanine + ADP + phosphate + H2O + H(+). Its pathway is purine metabolism; 7-cyano-7-deazaguanine biosynthesis. Functionally, catalyzes the ATP-dependent conversion of 7-carboxy-7-deazaguanine (CDG) to 7-cyano-7-deazaguanine (preQ(0)). The sequence is that of 7-cyano-7-deazaguanine synthase from Psychromonas ingrahamii (strain DSM 17664 / CCUG 51855 / 37).